The primary structure comprises 59 residues: DNA gyrase inhibitor YacG (59 aa).

Residues Cys7, Cys10, Cys25, and Cys29 each contribute to the Zn(2+) site.

It belongs to the DNA gyrase inhibitor YacG family. Interacts with GyrB. It depends on Zn(2+) as a cofactor.

In terms of biological role, inhibits all the catalytic activities of DNA gyrase by preventing its interaction with DNA. Acts by binding directly to the C-terminal domain of GyrB, which probably disrupts DNA binding by the gyrase. The chain is DNA gyrase inhibitor YacG from Geobacter sulfurreducens (strain ATCC 51573 / DSM 12127 / PCA).